Consider the following 415-residue polypeptide: Phosphoglycerate transport system transcriptional regulatory protein PgtA (415 aa).

In terms of domain architecture, Response regulatory spans 7–121; sequence SILLIDDDVD…KLLILIEDAL (115 aa). Residue Asp-56 is modified to 4-aspartylphosphate. The Sigma-54 factor interaction domain occupies 142-341; sequence LIGRSEWMNQ…LANAAELFAV (200 aa). 170-177 provides a ligand contact to ATP; that stretch reads GEHGTGRM. The segment at residues 385-404 is a DNA-binding region (H-T-H motif); the sequence is INEVAEYLQIPRKKLYLRMK.

Phosphorylated by PgtB.

The protein localises to the cytoplasm. In terms of biological role, member of the two-component regulatory system PgtB/PgtA that regulates the inducible phosphoglycerate transport system. When activated by PgtB it acts in conjunction with sigma-54 as a transcriptional activator. This is Phosphoglycerate transport system transcriptional regulatory protein PgtA (pgtA) from Salmonella typhimurium (strain LT2 / SGSC1412 / ATCC 700720).